A 1396-amino-acid polypeptide reads, in one-letter code: MRLSSEAKIAESGGQPPTAGSRSETGSESTEAESADPKAQKWYQRSLNPLRWQKIPPVPEERTVSREYGASFFSIASFQWMAPLMKVGYLRPLELQDIWTVNPDREVDVLTKRFEVSLEKRTNAGAKRPLLWALYDTFRFEFLLGGFCHLISSLLIVFAPYLTRYQIAFATEAYVAQRSGQPAPRIGRGMGFVVGITVMQAIQSLCTNQFLYRGQMVGGQIRAVLILQIFNKAMKLSGRAKAGGVQSPEQQEKIKELKAAKDQALKKPGSPPADDKGWGNGRIVALMSIDVDRINLACGMFHISWTAPVSIIVALILLLVNLTYSALAGFGLLVIGMPFLTYAVRFLFKRRRNINKLTDQRVSLTQEILQGVRFVKFFGWESSFLDRLKEIRHHEIRSIQTLLAVRNGILCVSMAIPVFASMLSFITYALSNHVLDPAPIFSSLALFNSLRMPLNLLPLVLGQITDAWTALNRIQEFIVAEEQKEDIERDEHMPEAVRMDRASFTWERKAADKEAEKVEKKANPRRTEPKSEAPTDSAESDEPFQLRDMTLDIRRDELVAVIGTVGSGKSSLLAALAGDMRLTDGSVRLSTSRAFCPQYTWIQNTSLRDNILFGKDYDEKWYDQVIDACALKPDLEILPNGDATEIGERGITISGGQKQRLNIARAIYFNAELVLLDDPLSAVDAHVGRHIMDKAICGLLKGRCRILATHQLHVLSRCDRIVVMDDGRIHAVGTFDELSRDNDLFKQLMSTASQDSKEDEEEATEVVEEEAEKQAQQEPTKPAAALMQQEEKATDSVGWTVWKAYIRASGSYFNALAILFLLAFANVVNVWTNLWLSYWTSNHYPSLSTGQYIGIYAGLGAGSALTMFIFSTYMSTAGTNASRQMLQLAMTRVLRAPMSFFDTTPLGRITNRFSKDIGVMDNELCDAMRMYAITITMIVSIMILIIVFYHYFAIALVPLFLLFLTASNYYRSSAREMKRHESILRSAVYARFSEAITGTASIRAYGVQNQFRSSLRDSVDTMNGAYFLTFSNQRWLSVRLDAVAVLLVFVTGVLVVTSRFDVSPSISGLVLSYILAIAQMLQFTVRQLAEVENNMNATERVHYYGTQLEEEAPAHIPSNPVPESWPPHGEITFDNVAMRYRPGLPLVLKNLSMNISGGERIGIVGRTGAGKSSIMSALFRLTELSSGRITIDGVDISTIGLHDLRSRLAIIPQDPTLFRGSIRSNLDPFNEHSDLELWDALRKAHLIDSDTKDSAVDASNPNGNANAQRLTLDTAVDEEGLTFSLGQRQLMALARALVRNARIIICDEATSSVDFATDQRIQETMAQGFEGKTLLCIAHRLKTIIHYDRICVMDQGSIAEIDTPLNLWEKEDGIFRAMCERSGISREDIVGQVEKE.

Residues 1–40 (MRLSSEAKIAESGGQPPTAGSRSETGSESTEAESADPKAQ) are disordered. Residues 18 to 29 (TAGSRSETGSES) show a composition bias toward low complexity. 3 consecutive transmembrane segments (helical) span residues 142–162 (FLLG…APYL), 191–211 (GFVV…NQFL), and 300–320 (MFHI…LLLV). The 324-residue stretch at 143–466 (LLGGFCHLIS…LPLVLGQITD (324 aa)) folds into the ABC transmembrane type-1 1 domain. Residue Asn321 is glycosylated (N-linked (GlcNAc...) asparagine). 3 consecutive transmembrane segments (helical) span residues 324-344 (YSAL…TYAV), 409-429 (ILCV…ITYA), and 440-460 (IFSS…LPLV). The span at 510–533 (AADKEAEKVEKKANPRRTEPKSEA) shows a compositional bias: basic and acidic residues. The disordered stretch occupies residues 510–543 (AADKEAEKVEKKANPRRTEPKSEAPTDSAESDEP). The ABC transporter 1 domain occupies 525–751 (RRTEPKSEAP…NDLFKQLMST (227 aa)). An ATP-binding site is contributed by 563 to 570 (GTVGSGKS). N-linked (GlcNAc...) asparagine glycosylation is present at Asn604. The segment at 751-787 (TASQDSKEDEEEATEVVEEEAEKQAQQEPTKPAAALM) is disordered. The span at 757–771 (KEDEEEATEVVEEEA) shows a compositional bias: acidic residues. A run of 2 helical transmembrane segments spans residues 816-836 (LAIL…NLWL) and 852-872 (YIGI…IFST). The 278-residue stretch at 816–1093 (LAILFLLAFA…TVRQLAEVEN (278 aa)) folds into the ABC transmembrane type-1 2 domain. Asn880 carries an N-linked (GlcNAc...) asparagine glycan. 4 helical membrane passes run 930–947 (MYAI…LIIV), 951–970 (YFAI…SNYY), 1036–1056 (LSVR…VLVV), and 1065–1085 (SISG…QFTV). N-linked (GlcNAc...) asparagine glycans are attached at residues Asn1096, Asn1150, and Asn1154. The 250-residue stretch at 1131-1380 (ITFDNVAMRY…EDGIFRAMCE (250 aa)) folds into the ABC transporter 2 domain. 1165–1172 (GRTGAGKS) serves as a coordination point for ATP.

Belongs to the ABC transporter superfamily. ABCC family. Conjugate transporter (TC 3.A.1.208) subfamily.

Its subcellular location is the cell membrane. Its function is as follows. ABC-type transporter; part of the gene cluster that mediates the biosynthesis of cichorine, a phytotoxin active against knapweed, corn, and soybeans. CicA is probably involved in the secretion of cichorine. The sequence is that of ABC-type transporter cicA from Emericella nidulans (strain FGSC A4 / ATCC 38163 / CBS 112.46 / NRRL 194 / M139) (Aspergillus nidulans).